The sequence spans 232 residues: Large ribosomal subunit protein uL1 (232 aa).

It belongs to the universal ribosomal protein uL1 family. Part of the 50S ribosomal subunit.

Binds directly to 23S rRNA. The L1 stalk is quite mobile in the ribosome, and is involved in E site tRNA release. Functionally, protein L1 is also a translational repressor protein, it controls the translation of the L11 operon by binding to its mRNA. This chain is Large ribosomal subunit protein uL1, found in Cereibacter sphaeroides (strain ATCC 17025 / ATH 2.4.3) (Rhodobacter sphaeroides).